The following is a 454-amino-acid chain: UDP-N-acetylmuramate--L-alanine ligase (454 aa).

Residue 112–118 (GTHGKTT) coordinates ATP.

This sequence belongs to the MurCDEF family.

It localises to the cytoplasm. The enzyme catalyses UDP-N-acetyl-alpha-D-muramate + L-alanine + ATP = UDP-N-acetyl-alpha-D-muramoyl-L-alanine + ADP + phosphate + H(+). It functions in the pathway cell wall biogenesis; peptidoglycan biosynthesis. Cell wall formation. In Nitratidesulfovibrio vulgaris (strain ATCC 29579 / DSM 644 / CCUG 34227 / NCIMB 8303 / VKM B-1760 / Hildenborough) (Desulfovibrio vulgaris), this protein is UDP-N-acetylmuramate--L-alanine ligase.